A 957-amino-acid chain; its full sequence is Atromentin synthetase (957 aa).

The adenylation (A) domain stretch occupies residues 59–464 (SVQARTFQDF…SGRIKDTVIV (406 aa)). In terms of domain architecture, Carrier spans 596–674 (TPSTDDEKAL…DLAKYVNGLV (79 aa)). The thiolation and peptide carrier (T) domain stretch occupies residues 601-671 (DEKALAAIYA…IVSDLAKYVN (71 aa)). The residue at position 633 (S633) is an O-(pantetheine 4'-phosphoryl)serine. A thioesterase (TE) domain region spans residues 697 to 947 (PIFFVHPGVG…FDHVPQFQKI (251 aa)).

This sequence belongs to the ATP-dependent AMP-binding enzyme family.

The protein operates within secondary metabolite biosynthesis. Functionally, the L-tyrosine:2-oxoglutarate aminotransferase atrD and the atromentin synthetase atrA catalyze consecutive steps to turn over L-tyrosine into atromentin, which represents the generic precursor molecule for the entire terphenylquinone and pulvinic acid family of pigments, which are widely distributed secondary metabolites in homobasidiomycetes. The first step is catalyzed by atrD which converts L-tyrosine in to 4-hydroxyphenylpyruvate (4-HPP). Adenylation of two 4-HPP monomers by the atrA adenylation (A) domain, ester bond formation between monomers and atrA, and symmetric C-C-bond formation between two monomers by atrA leads to atromentin. This chain is Atromentin synthetase, found in Tapinella panuoides (Oyster rollrim mushroom).